Consider the following 636-residue polypeptide: Protein meg-1 (636 aa).

Polar residues-rich tracts occupy residues 1-13 (MDNR…NGNF), 38-54 (SSGN…NQQQ), and 292-355 (LSMN…QYNH). 4 disordered regions span residues 1-54 (MDNR…NQQQ), 289-367 (LFNL…APHL), 484-504 (SDVA…SMYI), and 521-542 (LDSS…KTPS). The residue at position 574 (S574) is a Phosphoserine; by mbk-2. The interval 591-636 (MSQSFLHQQDDEAPDCTKNVHSESDLKQAEPQESDKQSDKELPSNE) is disordered. The span at 608 to 636 (KNVHSESDLKQAEPQESDKQSDKELPSNE) shows a compositional bias: basic and acidic residues.

As to quaternary structure, interacts with pptr-1, pptr-2 and pgl-1. Phosphorylated by mbk-2, which promotes the disassembly of zygotic P granules in the anterior cytoplasm of pre-gastrulation embryos. Dephosphorylated by a phosphatase complex containing the PP2A regulatory subunit pptr-1, which promotes the assembly and accumulation of zygotic P granules in the posterior cytoplasm of pre-gastrulation embryos. Not expressed in the adult germline or in any somatic tissues.

The protein localises to the cytoplasmic granule. Functionally, p granule component, which acts redundantly with P granule component meg-2 to promote P granule segregation during embryogenesis, and germ cell proliferation and differentiation in larval stages. In its phosphorylated form, and together with meg-2, promotes the disassembly of zygotic P granules in the anterior cytoplasm of pre-gastrulation embryos. In its dephosphorylated form, and together with meg-2, promotes the assembly and accumulation of zygotic P granules in the posterior cytoplasm of pre-gastrulation embryos. May function with the nanos family members nos-2 and nos-3 to promote germ cell proliferation during larval development. Required for fertility. The polypeptide is Protein meg-1 (Caenorhabditis elegans).